Reading from the N-terminus, the 148-residue chain is Endoribonuclease YbeY (148 aa).

Zn(2+) is bound by residues His113, His117, and His123.

This sequence belongs to the endoribonuclease YbeY family. The cofactor is Zn(2+).

It localises to the cytoplasm. Its function is as follows. Single strand-specific metallo-endoribonuclease involved in late-stage 70S ribosome quality control and in maturation of the 3' terminus of the 16S rRNA. This is Endoribonuclease YbeY from Borrelia recurrentis (strain A1).